Reading from the N-terminus, the 425-residue chain is Serine--tRNA ligase (425 aa).

Thr233–Glu235 is an L-serine binding site. Residue Arg264–Glu266 participates in ATP binding. Glu287 serves as a coordination point for L-serine. Residue Glu351 to Ser354 participates in ATP binding. Ser385 contributes to the L-serine binding site.

This sequence belongs to the class-II aminoacyl-tRNA synthetase family. Type-1 seryl-tRNA synthetase subfamily. In terms of assembly, homodimer. The tRNA molecule binds across the dimer.

The protein localises to the cytoplasm. It carries out the reaction tRNA(Ser) + L-serine + ATP = L-seryl-tRNA(Ser) + AMP + diphosphate + H(+). The catalysed reaction is tRNA(Sec) + L-serine + ATP = L-seryl-tRNA(Sec) + AMP + diphosphate + H(+). It participates in aminoacyl-tRNA biosynthesis; selenocysteinyl-tRNA(Sec) biosynthesis; L-seryl-tRNA(Sec) from L-serine and tRNA(Sec): step 1/1. Catalyzes the attachment of serine to tRNA(Ser). Is also able to aminoacylate tRNA(Sec) with serine, to form the misacylated tRNA L-seryl-tRNA(Sec), which will be further converted into selenocysteinyl-tRNA(Sec). This is Serine--tRNA ligase from Synechococcus sp. (strain WH7803).